Consider the following 205-residue polypeptide: Pyridoxine/pyridoxamine 5'-phosphate oxidase (205 aa).

Residues 53–58, 68–69, Lys-75, and Gln-97 each bind FMN; these read RMVLLK and YT. Lys-58 provides a ligand contact to substrate. Residues Tyr-115, Arg-119, and Ser-123 each coordinate substrate. FMN is bound by residues 132-133 and Trp-177; that span reads QS. 183 to 185 provides a ligand contact to substrate; the sequence is RLH. FMN is bound at residue Arg-187.

Belongs to the pyridoxamine 5'-phosphate oxidase family. As to quaternary structure, homodimer. FMN is required as a cofactor.

The catalysed reaction is pyridoxamine 5'-phosphate + O2 + H2O = pyridoxal 5'-phosphate + H2O2 + NH4(+). It catalyses the reaction pyridoxine 5'-phosphate + O2 = pyridoxal 5'-phosphate + H2O2. It functions in the pathway cofactor metabolism; pyridoxal 5'-phosphate salvage; pyridoxal 5'-phosphate from pyridoxamine 5'-phosphate: step 1/1. It participates in cofactor metabolism; pyridoxal 5'-phosphate salvage; pyridoxal 5'-phosphate from pyridoxine 5'-phosphate: step 1/1. In terms of biological role, catalyzes the oxidation of either pyridoxine 5'-phosphate (PNP) or pyridoxamine 5'-phosphate (PMP) into pyridoxal 5'-phosphate (PLP). This chain is Pyridoxine/pyridoxamine 5'-phosphate oxidase, found in Mesorhizobium japonicum (strain LMG 29417 / CECT 9101 / MAFF 303099) (Mesorhizobium loti (strain MAFF 303099)).